Here is a 432-residue protein sequence, read N- to C-terminus: MLTDTLNTTKSEEIFAAAQKLMPGGVSSPVRAFKSVGGQPIVFDRVKGAHVWDVDGNQYIDYVGTWGPAICGHAHPEVLTALKEALDKGTSFGAPCLLENVLAEMVIDAVPSVEVVRFVNSGTEACMSVLRLMRAFTGREKVIKFEGCYHGHADMFLVKAGSGVATLGLPDSPGVPKSVTGNTLTAPYNDLQSVQALFSQHPDQIAGVILEPVVGNAGFIPPDAGFLEGLREITKENGALLVFDEVMTGFRISYGGAQEKFGITPDLTTLGKVIGGGLPVGAYGGRRDIMSMVAPAGPMYQAGTLSGNPLAMTAGIKTLELLRRSGTYDQLDRVTGKLISGLLQIAREAGHEVCGGHINGMFGMFFAPGPVHSYDDAKAADAAKFAKFHRGMLEQGVYLAPSQFEAGFTSLAHTDADIDQTLEAAKVVLANI.

The residue at position 272 (Lys-272) is an N6-(pyridoxal phosphate)lysine.

The protein belongs to the class-III pyridoxal-phosphate-dependent aminotransferase family. HemL subfamily. Homodimer. It depends on pyridoxal 5'-phosphate as a cofactor.

The protein resides in the cytoplasm. It carries out the reaction (S)-4-amino-5-oxopentanoate = 5-aminolevulinate. It participates in porphyrin-containing compound metabolism; protoporphyrin-IX biosynthesis; 5-aminolevulinate from L-glutamyl-tRNA(Glu): step 2/2. The protein operates within porphyrin-containing compound metabolism; chlorophyll biosynthesis. The polypeptide is Glutamate-1-semialdehyde 2,1-aminomutase (Acaryochloris marina (strain MBIC 11017)).